A 102-amino-acid polypeptide reads, in one-letter code: ATP-dependent Clp protease adapter protein ClpS (102 aa).

Belongs to the ClpS family. In terms of assembly, binds to the N-terminal domain of the chaperone ClpA.

Functionally, involved in the modulation of the specificity of the ClpAP-mediated ATP-dependent protein degradation. In Shewanella baltica (strain OS155 / ATCC BAA-1091), this protein is ATP-dependent Clp protease adapter protein ClpS.